We begin with the raw amino-acid sequence, 464 residues long: Argininosuccinate lyase (464 aa).

The protein belongs to the lyase 1 family. Argininosuccinate lyase subfamily.

Its subcellular location is the cytoplasm. The catalysed reaction is 2-(N(omega)-L-arginino)succinate = fumarate + L-arginine. It participates in amino-acid biosynthesis; L-arginine biosynthesis; L-arginine from L-ornithine and carbamoyl phosphate: step 3/3. This chain is Argininosuccinate lyase, found in Koribacter versatilis (strain Ellin345).